A 412-amino-acid polypeptide reads, in one-letter code: D-xylonate dehydratase (412 aa).

Homooctamer.

The enzyme catalyses D-xylonate = 2-dehydro-3-deoxy-D-arabinonate + H2O. Functionally, NADP-dependent D-xylose dehydrogenase involved in the degradation of D-xylose, a major component of hemicelluloses such as xylan. Catalyzes the third reaction in the xylose utilization pathway through dehydratation of D-xylonate into 2-dehydro-3-deoxy-D-xylonate. In Haloferax volcanii (strain ATCC 29605 / DSM 3757 / JCM 8879 / NBRC 14742 / NCIMB 2012 / VKM B-1768 / DS2) (Halobacterium volcanii), this protein is D-xylonate dehydratase.